Consider the following 593-residue polypeptide: 3-hydroxy-3-methylglutaryl-coenzyme A reductase (593 aa).

The disordered stretch occupies residues 1 to 36; that stretch reads MDVRRRSINSIHQIPSVGGTAPPMLKPKQPTKVDAV. Helical transmembrane passes span 52 to 72 and 94 to 114; these read LYIT…YLLV and AIFT…IGLV. The tract at residues 115-177 is linker; it reads QPFTSRSSHD…PVPISPPSSE (63 aa). The interval 178 to 593 is catalytic; sequence EDEEIIKSVV…SNKDVTKASS (416 aa). The active-site Charge relay system is E272. N-linked (GlcNAc...) asparagine glycosylation is present at N336. K404 functions as the Charge relay system in the catalytic mechanism. N449 carries an N-linked (GlcNAc...) asparagine glycan. The Charge relay system role is filled by D480. H578 functions as the Proton donor in the catalytic mechanism. An N-linked (GlcNAc...) asparagine glycan is attached at N582.

Belongs to the HMG-CoA reductase family.

The protein localises to the endoplasmic reticulum membrane. It catalyses the reaction (R)-mevalonate + 2 NADP(+) + CoA = (3S)-3-hydroxy-3-methylglutaryl-CoA + 2 NADPH + 2 H(+). The protein operates within metabolic intermediate biosynthesis; (R)-mevalonate biosynthesis; (R)-mevalonate from acetyl-CoA: step 3/3. Its function is as follows. Catalyzes the synthesis of mevalonate. The specific precursor of all isoprenoid compounds present in plants. This chain is 3-hydroxy-3-methylglutaryl-coenzyme A reductase, found in Camptotheca acuminata (Happy tree).